Reading from the N-terminus, the 305-residue chain is NADH-ubiquinone oxidoreductase chain 1 (305 aa).

Transmembrane regions (helical) follow at residues 3 to 23 (WVAV…VGFY), 71 to 91 (VGPF…GWLL), 99 to 119 (VFYV…VYGV), 145 to 165 (YEIP…VFMF), 175 to 195 (LFFF…CMLA), 221 to 241 (GGGF…SSVM), 246 to 266 (FFGG…IFFV), and 285 to 305 (WTVL…LVGV).

This sequence belongs to the complex I subunit 1 family.

Its subcellular location is the mitochondrion inner membrane. It catalyses the reaction a ubiquinone + NADH + 5 H(+)(in) = a ubiquinol + NAD(+) + 4 H(+)(out). In terms of biological role, core subunit of the mitochondrial membrane respiratory chain NADH dehydrogenase (Complex I) that is believed to belong to the minimal assembly required for catalysis. Complex I functions in the transfer of electrons from NADH to the respiratory chain. The immediate electron acceptor for the enzyme is believed to be ubiquinone. The sequence is that of NADH-ubiquinone oxidoreductase chain 1 (ND1) from Mytilus edulis (Blue mussel).